Reading from the N-terminus, the 355-residue chain is G protein alpha i subunit (355 aa).

G2 carries the N-myristoyl glycine lipid modification. Residue C3 is the site of S-palmitoyl cysteine attachment. The region spanning 33–355 (SEVKLLLLGA…KNNLKQIGLF (323 aa)) is the G-alpha domain. Residues 36–49 (KLLLLGAGESGKST) are G1 motif. Residues 41–48 (GAGESGKS), 176–182 (LRTRVKT), 201–205 (DVGGQ), 270–273 (NKKD), and A327 contribute to the GTP site. Mg(2+) is bound by residues S48 and T182. Positions 174–182 (DVLRTRVKT) are G2 motif. The segment at 197–206 (FKLFDVGGQR) is G3 motif. The G4 motif stretch occupies residues 266-273 (ILFLNKKD). The segment at 325–330 (TCATDT) is G5 motif.

It belongs to the G-alpha family. G(i/o/t/z) subfamily. As to quaternary structure, g proteins are composed of 3 units; alpha, beta and gamma. The alpha chain contains the guanine nucleotide binding site. Interacts (via GDP- or GTP-bound forms) with loco (via GoLoco and RGS domains). Interacts with raps/pins.

The protein resides in the cell membrane. It is found in the apical cell membrane. Functionally, guanine nucleotide-binding proteins (G proteins) are involved as modulators or transducers in various transmembrane signaling systems. Plays a role in glial cell differentiation during embryogenesis; loco, Galphao and the G-protein coupled receptor, moody, are required in the surface glia to achieve effective insulation of the nerve cord. The sequence is that of G protein alpha i subunit (Galphai) from Drosophila melanogaster (Fruit fly).